The chain runs to 130 residues: uncharacterized protein (130 aa).

Helical transmembrane passes span 35-57 and 72-91; these read FLITLLSALFVIFILLLVSFISL and IVFFAISAGAFFLILILLLL.

The protein localises to the cell membrane. This is an uncharacterized protein from Pasteurella multocida (strain Pm70).